A 99-amino-acid chain; its full sequence is Large ribosomal subunit protein uL23 (99 aa).

The protein belongs to the universal ribosomal protein uL23 family. Part of the 50S ribosomal subunit. Contacts protein L29, and trigger factor when it is bound to the ribosome.

Its function is as follows. One of the early assembly proteins it binds 23S rRNA. One of the proteins that surrounds the polypeptide exit tunnel on the outside of the ribosome. Forms the main docking site for trigger factor binding to the ribosome. This Clavibacter michiganensis subsp. michiganensis (strain NCPPB 382) protein is Large ribosomal subunit protein uL23.